We begin with the raw amino-acid sequence, 214 residues long: ATP phosphoribosyltransferase (214 aa).

Belongs to the ATP phosphoribosyltransferase family. Short subfamily. As to quaternary structure, heteromultimer composed of HisG and HisZ subunits.

It localises to the cytoplasm. It carries out the reaction 1-(5-phospho-beta-D-ribosyl)-ATP + diphosphate = 5-phospho-alpha-D-ribose 1-diphosphate + ATP. The protein operates within amino-acid biosynthesis; L-histidine biosynthesis; L-histidine from 5-phospho-alpha-D-ribose 1-diphosphate: step 1/9. Its function is as follows. Catalyzes the condensation of ATP and 5-phosphoribose 1-diphosphate to form N'-(5'-phosphoribosyl)-ATP (PR-ATP). Has a crucial role in the pathway because the rate of histidine biosynthesis seems to be controlled primarily by regulation of HisG enzymatic activity. This chain is ATP phosphoribosyltransferase, found in Nostoc punctiforme (strain ATCC 29133 / PCC 73102).